The sequence spans 116 residues: Putative pterin-4-alpha-carbinolamine dehydratase (116 aa).

This sequence belongs to the pterin-4-alpha-carbinolamine dehydratase family.

It catalyses the reaction (4aS,6R)-4a-hydroxy-L-erythro-5,6,7,8-tetrahydrobiopterin = (6R)-L-erythro-6,7-dihydrobiopterin + H2O. The chain is Putative pterin-4-alpha-carbinolamine dehydratase from Microcystis aeruginosa (strain NIES-843 / IAM M-2473).